A 213-amino-acid polypeptide reads, in one-letter code: ATP synthase peripheral stalk subunit OSCP, mitochondrial (213 aa).

Residues 1-23 constitute a mitochondrion transit peptide; it reads MATPAVSGLSRQVRCFSTSVVRP. The SIFI-degron signature appears at 5–23; it reads AVSGLSRQVRCFSTSVVRP. An N6-acetyllysine mark is found at Lys-54, Lys-60, Lys-70, and Lys-73. Lys-90 carries the post-translational modification N6-succinyllysine. 2 positions are modified to N6-acetyllysine; alternate: Lys-158 and Lys-162. N6-succinyllysine; alternate is present on residues Lys-158 and Lys-162. 3 positions are modified to N6-acetyllysine: Lys-172, Lys-176, and Lys-192. Lys-199 is modified (N6-succinyllysine).

Belongs to the ATPase delta chain family. In terms of assembly, component of the ATP synthase complex composed at least of ATP5F1A/subunit alpha, ATP5F1B/subunit beta, ATP5MC1/subunit c (homooctomer), MT-ATP6/subunit a, MT-ATP8/subunit 8, ATP5ME/subunit e, ATP5MF/subunit f, ATP5MG/subunit g, ATP5MK/subunit k, ATP5MJ/subunit j, ATP5F1C/subunit gamma, ATP5F1D/subunit delta, ATP5F1E/subunit epsilon, ATP5PF/subunit F6, ATP5PB/subunit b, ATP5PD/subunit d, ATP5PO/subunit OSCP. ATP synthase complex consists of a soluble F(1) head domain (subunits alpha(3) and beta(3)) - the catalytic core - and a membrane F(0) domain - the membrane proton channel (subunits c, a, 8, e, f, g, k and j). These two domains are linked by a central stalk (subunits gamma, delta, and epsilon) rotating inside the F1 region and a stationary peripheral stalk (subunits F6, b, d, and OSCP). Acetylation at Lys-162 decreases ATP production. Deacetylated by SIRT3. Post-translationally, in response to mitochondrial stress, the precursor protein is ubiquitinated by the SIFI complex in the cytoplasm before mitochondrial import, leading to its degradation. Within the SIFI complex, UBR4 initiates ubiquitin chain that are further elongated or branched by KCMF1.

Its subcellular location is the mitochondrion. It localises to the mitochondrion inner membrane. Functionally, subunit OSCP, of the mitochondrial membrane ATP synthase complex (F(1)F(0) ATP synthase or Complex V) that produces ATP from ADP in the presence of a proton gradient across the membrane which is generated by electron transport complexes of the respiratory chain. ATP synthase complex consist of a soluble F(1) head domain - the catalytic core - and a membrane F(1) domain - the membrane proton channel. These two domains are linked by a central stalk rotating inside the F(1) region and a stationary peripheral stalk. During catalysis, ATP synthesis in the catalytic domain of F(1) is coupled via a rotary mechanism of the central stalk subunits to proton translocation. In vivo, can only synthesize ATP although its ATP hydrolase activity can be activated artificially in vitro. Part of the complex F(0) domain. Part of the complex F(0) domain and the peripheric stalk, which acts as a stator to hold the catalytic alpha(3)beta(3) subcomplex and subunit a/ATP6 static relative to the rotary elements. The chain is ATP synthase peripheral stalk subunit OSCP, mitochondrial from Pongo abelii (Sumatran orangutan).